A 71-amino-acid chain; its full sequence is Beta-defensin 7 (71 aa).

Residues 1 to 22 (MRIHYVLFAFLLVLLSPFAAFS) form the signal peptide. Position 23 is a pyrrolidone carboxylic acid (Gln23). Residues 23-25 (QDI) constitute a propeptide that is removed on maturation. 3 disulfides stabilise this stretch: Cys31/Cys58, Cys38/Cys52, and Cys42/Cys59.

Belongs to the beta-defensin family. LAP/TAP subfamily.

The protein resides in the secreted. Functionally, has bactericidal activity. This is Beta-defensin 7 (Defb7) from Mus musculus (Mouse).